The sequence spans 219 residues: ATP-dependent dethiobiotin synthetase BioD (219 aa).

12-17 (EVGKTY) lines the ATP pocket. Position 16 (threonine 16) interacts with Mg(2+). The active site involves lysine 37. A substrate-binding site is contributed by serine 41. ATP-binding positions include aspartate 52, 114 to 117 (EGAG), and 174 to 175 (NC). Residues aspartate 52 and glutamate 114 each contribute to the Mg(2+) site.

It belongs to the dethiobiotin synthetase family. Homodimer. Mg(2+) serves as cofactor.

Its subcellular location is the cytoplasm. It carries out the reaction (7R,8S)-7,8-diammoniononanoate + CO2 + ATP = (4R,5S)-dethiobiotin + ADP + phosphate + 3 H(+). Its pathway is cofactor biosynthesis; biotin biosynthesis; biotin from 7,8-diaminononanoate: step 1/2. Functionally, catalyzes a mechanistically unusual reaction, the ATP-dependent insertion of CO2 between the N7 and N8 nitrogen atoms of 7,8-diaminopelargonic acid (DAPA, also called 7,8-diammoniononanoate) to form a ureido ring. The chain is ATP-dependent dethiobiotin synthetase BioD from Francisella tularensis subsp. holarctica (strain FTNF002-00 / FTA).